The following is a 691-amino-acid chain: Dipeptidyl-peptidase 5 (691 aa).

Positions 1 to 20 (MKRTILSLLAAVSLAIPVYA) are cleaved as a signal peptide. Catalysis depends on charge relay system residues serine 549, aspartate 634, and histidine 666.

The protein belongs to the peptidase S9C family. Homodimer.

It is found in the periplasm. Functionally, catalyzes the removal of dipeptides from the N-terminus of oligopeptides. Prefers Ala and hydrophobic residues at the P1 position, and has no preference for P2 residues. Shows the highest dipeptidyl peptidase activity toward the synthetic substrate Lys-Ala-methylcoumaryl-7-amide (Lys-Ala-MCA). Is likely involved in amino acid metabolism and bacterial growth/survival of asaccharolytic P.endodontalis, that utilizes amino acids from extracellular proteinaceous nutrients as energy and carbon sources. The protein is Dipeptidyl-peptidase 5 of Porphyromonas endodontalis (strain ATCC 35406 / DSM 24491 / JCM 8526 / CCUG 16442 / BCRC 14492 / NCTC 13058 / HG 370) (Bacteroides endodontalis).